The following is a 111-amino-acid chain: PCNA-associated factor (111 aa).

S8 carries the post-translational modification Phosphoserine. K15 participates in a covalent cross-link: Glycyl lysine isopeptide (Lys-Gly) (interchain with G-Cter in ubiquitin). Residues R23–N34 carry the D-box motif. A disordered region spans residues R23 to E111. K24 carries the N6-acetyllysine; alternate modification. Residue K24 forms a Glycyl lysine isopeptide (Lys-Gly) (interchain with G-Cter in ubiquitin); alternate linkage. 3 positions are modified to phosphoserine: S28, S31, and S72. Residues S28–S40 show a composition bias toward low complexity. Residues Q62 to S72 carry the PIP-box motif. Basic and acidic residues predominate over residues S72–Q81. Residues K78–N80 carry the KEN box motif. The Initiation motif signature appears at E85–K97.

Interacts (when monoubiquitinated at Lys-15 and Lys-24) with PCNA. Interacts with isoform 2/p33ING1b of ING1. Interacts with BRCA1. Post-translationally, monoubiquitinated at Lys-15 and Lys-24 during normal S phase, promoting its association with PCNA. Also diubiquitinated at these 2 sites. Following DNA damage, monoubiquitin chains at Lys-15 and Lys-24 are probably extended, leading to disrupt the interaction with PCNA. Polyubiquitinated by the APC/C complex at the mitotic exit, leading to its degradation by the proteasome. In terms of tissue distribution, expressed predominantly in liver, pancreas and placenta. Not detected in heart or brain. Highly expressed in a number of tumors, especially esophageal tumors, in anaplastic thyroid carcinomas, adrenocortical carcinomas, and in non-small-cell lung cancer lines.

It localises to the nucleus. Its subcellular location is the cytoplasm. The protein localises to the perinuclear region. Its function is as follows. PCNA-binding protein that acts as a regulator of DNA repair during DNA replication. Following DNA damage, the interaction with PCNA is disrupted, facilitating the interaction between monoubiquitinated PCNA and the translesion DNA synthesis DNA polymerase eta (POLH) at stalled replisomes, facilitating the bypass of replication-fork-blocking lesions. Also acts as a regulator of centrosome number. This chain is PCNA-associated factor, found in Homo sapiens (Human).